A 499-amino-acid polypeptide reads, in one-letter code: Thioredoxin reductase 1, cytoplasmic (499 aa).

Residues 18 to 23, 42 to 43, 58 to 59, and 63 to 67 contribute to the FAD site; these read IGGGSG, DF, TC, and GCIPK. Cysteines 59 and 64 form a disulfide. The residue at position 68 (lysine 68) is an N6-succinyllysine. Tyrosine 131 carries the phosphotyrosine modification. Residues 131–132 and threonine 161 each bind FAD; that span reads YG. NADP(+)-binding positions include arginine 166, 198-204, 221-222, arginine 226, 226-228, 291-293, and lysine 315; these read ASYVALE, RS, RGF, and VGR. Tyrosine 200 contacts FAD. Residues aspartate 334, 341-343, and histidine 472 contribute to the FAD site; that span reads ELT. Glutamate 341 contacts NADP(+). Catalysis depends on histidine 472, which acts as the Proton acceptor. Positions 497 to 498 form a cross-link, cysteinyl-selenocysteine (Cys-Sec); it reads CU. Position 498 (selenocysteine 498) is a non-standard amino acid, selenocysteine.

This sequence belongs to the class-I pyridine nucleotide-disulfide oxidoreductase family. In terms of assembly, homodimer. It depends on FAD as a cofactor. ISGylated.

It localises to the cytoplasm. It carries out the reaction [thioredoxin]-dithiol + NADP(+) = [thioredoxin]-disulfide + NADPH + H(+). It catalyses the reaction H2O2 + NADPH + H(+) = NADP(+) + 2 H2O. Its function is as follows. Reduces disulfideprotein thioredoxin (Trx) to its dithiol-containing form. Homodimeric flavoprotein involved in the regulation of cellular redox reactions, growth and differentiation. Contains a selenocysteine residue at the C-terminal active site that is essential for catalysis. Also has reductase activity on hydrogen peroxide (H2O2). The protein is Thioredoxin reductase 1, cytoplasmic of Rattus norvegicus (Rat).